A 280-amino-acid polypeptide reads, in one-letter code: MKFRAKIVDGACLNHFTRISNMIAKLAKTCTLRISPDKLNFILCDKLANGGVSMWCELEQENFFNEFQMEGVSAENNEIYLELTSENLSRALKTAQNARALKIKLTNKHFPCLTVSVELLSMSSSSRIVTHDIPIKVIPRKLWKDLQEPVVPDPDVSIYLPVLKTMKSVVEKMKNISNHLVIEANLDGELNLKIETELVCVTTHFKDLGNPPLASESTHEDRNVEHMAEVHIDIRKLLQFLAGQQVNPTKALCNIVNNKMVHFDLLHEDVSLQYFIPALS.

This sequence belongs to the HUS1 family. In terms of assembly, component of the toroidal 9-1-1 (RAD9-RAD1-HUS1) complex, composed of RAD9A, RAD1 and HUS1. The 9-1-1 complex associates with LIG1, POLB, FEN1, RAD17, HDAC1, RPA1 and RPA2. The 9-1-1 complex associates with the RAD17-RFC complex. HUS1 interacts with POLB, HDAC1, FEN1, PCNA and RAD9B. HUS1 does not interact with RAD17. Interacts with DNAJC7. In terms of tissue distribution, ubiquitous.

It localises to the nucleus. It is found in the cytoplasm. Its subcellular location is the cytosol. Functionally, component of the 9-1-1 cell-cycle checkpoint response complex that plays a major role in DNA repair. The 9-1-1 complex is recruited to DNA lesion upon damage by the RAD17-replication factor C (RFC) clamp loader complex. Acts then as a sliding clamp platform on DNA for several proteins involved in long-patch base excision repair (LP-BER). The 9-1-1 complex stimulates DNA polymerase beta (POLB) activity by increasing its affinity for the 3'-OH end of the primer-template and stabilizes POLB to those sites where LP-BER proceeds; endonuclease FEN1 cleavage activity on substrates with double, nick, or gap flaps of distinct sequences and lengths; and DNA ligase I (LIG1) on long-patch base excision repair substrates. The 9-1-1 complex is necessary for the recruitment of RHNO1 to sites of double-stranded breaks (DSB) occurring during the S phase. This is Checkpoint protein HUS1 (HUS1) from Homo sapiens (Human).